The sequence spans 192 residues: Spermatogenesis-associated protein 3 (192 aa).

A compositionally biased stretch (basic residues) spans 1–15 (MKKVKKKRSEARRHR). Disordered stretches follow at residues 1 to 65 (MKKV…TTSR) and 161 to 184 (SRKP…GSGG). The segment covering 19-59 (SQHASSNSTSQQPSPESTPQQPSPESTPQQPSPESTPQHSS) has biased composition (low complexity).

It is found in the cell projection. The protein localises to the cilium. The protein resides in the flagellum. This Homo sapiens (Human) protein is Spermatogenesis-associated protein 3 (SPATA3).